Consider the following 1057-residue polypeptide: Probable sucrose-phosphate synthase 1 (1057 aa).

Residues 103 to 115 show a composition bias toward basic and acidic residues; it reads RRLERERGRREAT. Disordered regions lie at residues 103-143, 439-459, and 670-693; these read RRLE…STRS, PQDG…ASPD, and RHPQ…GDSL. Residues 442–452 show a composition bias toward acidic residues; sequence GDMDGETEGNE.

It belongs to the glycosyltransferase 1 family. Homodimer or homotetramer.

The catalysed reaction is beta-D-fructose 6-phosphate + UDP-alpha-D-glucose = sucrose 6(F)-phosphate + UDP + H(+). It participates in glycan biosynthesis; sucrose biosynthesis; sucrose from D-fructose 6-phosphate and UDP-alpha-D-glucose: step 1/2. Activity is regulated by phosphorylation and moderated by concentration of metabolites and light. Plays a role in photosynthetic sucrose synthesis by catalyzing the rate-limiting step of sucrose biosynthesis from UDP-glucose and fructose- 6-phosphate. Involved in the regulation of carbon partitioning in the leaves of plants. May regulate the synthesis of sucrose and therefore play a major role as a limiting factor in the export of photoassimilates out of the leaf. Plays a role for sucrose availability that is essential for plant growth and fiber elongation. The protein is Probable sucrose-phosphate synthase 1 (SPS1) of Citrus unshiu (Satsuma mandarin).